The following is a 178-amino-acid chain: Large ribosomal subunit protein uL6 (178 aa).

Belongs to the universal ribosomal protein uL6 family. As to quaternary structure, part of the 50S ribosomal subunit.

Its function is as follows. This protein binds to the 23S rRNA, and is important in its secondary structure. It is located near the subunit interface in the base of the L7/L12 stalk, and near the tRNA binding site of the peptidyltransferase center. This Limosilactobacillus fermentum (strain NBRC 3956 / LMG 18251) (Lactobacillus fermentum) protein is Large ribosomal subunit protein uL6.